Here is a 301-residue protein sequence, read N- to C-terminus: ATP synthase gamma chain (301 aa).

Belongs to the ATPase gamma chain family. F-type ATPases have 2 components, CF(1) - the catalytic core - and CF(0) - the membrane proton channel. CF(1) has five subunits: alpha(3), beta(3), gamma(1), delta(1), epsilon(1). CF(0) has three main subunits: a, b and c.

Its subcellular location is the cell inner membrane. Produces ATP from ADP in the presence of a proton gradient across the membrane. The gamma chain is believed to be important in regulating ATPase activity and the flow of protons through the CF(0) complex. The sequence is that of ATP synthase gamma chain from Bordetella avium (strain 197N).